A 147-amino-acid polypeptide reads, in one-letter code: 3-dehydroquinate dehydratase (147 aa).

Residue Y22 is the Proton acceptor of the active site. Positions 74, 80, and 87 each coordinate substrate. The active-site Proton donor is H101. Residues 102-103 and R112 each bind substrate; that span reads IS.

The protein belongs to the type-II 3-dehydroquinase family. In terms of assembly, homododecamer.

The catalysed reaction is 3-dehydroquinate = 3-dehydroshikimate + H2O. The protein operates within metabolic intermediate biosynthesis; chorismate biosynthesis; chorismate from D-erythrose 4-phosphate and phosphoenolpyruvate: step 3/7. Catalyzes a trans-dehydration via an enolate intermediate. This Lachnospira eligens (strain ATCC 27750 / DSM 3376 / VPI C15-48 / C15-B4) (Eubacterium eligens) protein is 3-dehydroquinate dehydratase.